A 223-amino-acid polypeptide reads, in one-letter code: Sigma non-opioid intracellular receptor 1 (223 aa).

Over M1–W9 the chain is Lumenal. The segment at P2–R8 is targeting to endoplasmic reticulum-associated lipid droplets. A helical transmembrane segment spans residues A10–L30. Over G31–P223 the chain is Cytoplasmic. The important for ligand-binding stretch occupies residues S99 to L106. Positions V177–P223 are C-terminal hydrophobic region.

It belongs to the ERG2 family. Homotrimer. Interacts with KCNA2; cocaine consumption leads to increased interaction. Forms a ternary complex with ANK2 and ITPR3. The complex is disrupted by agonists. Interacts with KCNA4. Interacts with RNF112 in an oxidative stress-regulated manner. Expressed in ependymocytes and neurons throughout the CNS from the olfactory bulb to the spinal cord. Expressed by progenitor, mature and satellite oligodendrocytes and by Schwann cells (at protein level). Expressed in liver, intestine, kidney, brain, lung and heart. Expressed by retinal cells.

Its subcellular location is the nucleus inner membrane. The protein localises to the nucleus outer membrane. The protein resides in the nucleus envelope. It is found in the cytoplasmic vesicle. It localises to the endoplasmic reticulum membrane. Its subcellular location is the membrane. The protein localises to the lipid droplet. The protein resides in the cell junction. It is found in the cell membrane. It localises to the cell projection. Its subcellular location is the growth cone. The protein localises to the postsynaptic density membrane. In terms of biological role, functions in lipid transport from the endoplasmic reticulum and is involved in a wide array of cellular functions probably through regulation of the biogenesis of lipid microdomains at the plasma membrane. Involved in the regulation of different receptors it plays a role in BDNF signaling and EGF signaling. Also regulates ion channels like the potassium channel and could modulate neurotransmitter release. Plays a role in calcium signaling through modulation together with ANK2 of the ITP3R-dependent calcium efflux at the endoplasmic reticulum. Plays a role in several other cell functions including proliferation, survival and death. Originally identified for its ability to bind various psychoactive drugs it is involved in learning processes, memory and mood alteration. Necessary for proper mitochondrial axonal transport in motor neurons, in particular the retrograde movement of mitochondria. Plays a role in protecting cells against oxidative stress-induced cell death via its interaction with RNF112. The polypeptide is Sigma non-opioid intracellular receptor 1 (Sigmar1) (Rattus norvegicus (Rat)).